The following is a 156-amino-acid chain: Persephin (156 aa).

A signal peptide spans Met1–Gly21. Cystine bridges form between Cys66–Cys124, Cys93–Cys152, and Cys97–Cys154.

It belongs to the TGF-beta family. GDNF subfamily. As to quaternary structure, homodimer; disulfide-linked. Interacts with GFRA4 coreceptor and RET: forms a 2:2:2 ternary complex composed of PSPN ligand, GFRA4 and RET receptor. In terms of tissue distribution, expressed at low levels in substantia nigra. Cochlea.

It localises to the secreted. In terms of biological role, growth factor that exhibits neurotrophic activity on mesencephalic dopaminergic and motor neurons. Acts by binding to its coreceptor, GFRA4, leading to autophosphorylation and activation of the RET receptor. The chain is Persephin from Rattus norvegicus (Rat).